The primary structure comprises 186 residues: Alkyl hydroperoxide reductase AhpD (186 aa).

C131 serves as the catalytic Proton donor. The cysteines at positions 131 and 134 are disulfide-linked. The Cysteine sulfenic acid (-SOH) intermediate role is filled by C134.

It belongs to the AhpD family.

The enzyme catalyses N(6)-[(R)-dihydrolipoyl]-L-lysyl-[lipoyl-carrier protein] + a hydroperoxide = N(6)-[(R)-lipoyl]-L-lysyl-[lipoyl-carrier protein] + an alcohol + H2O. Antioxidant protein with alkyl hydroperoxidase activity. Required for the reduction of the AhpC active site cysteine residues and for the regeneration of the AhpC enzyme activity. This Rhodospirillum centenum (strain ATCC 51521 / SW) protein is Alkyl hydroperoxide reductase AhpD.